Here is a 959-residue protein sequence, read N- to C-terminus: MGPSQPASTCVHLAPSLQLDAMSDPRNLQPQNQLQFNRNVPTNPRNLAVRYSCPHGIKIEKLKHSYNELNHGKDLDFKAGNELSSSVSFSVISEERLSYAVHLAKRDVKRRQFEEHVKDHLRSLPHSSHKGMHTKVERKDSKSQDVCHCSHQPSRVSLSSSGAKVYVYTSQPGRSDLTVPNSPPTHDPGLQLQPRIEENKNLWEQKGLLEVQRLQKELSGCIRKIEALTKKDRLEEALDPDEEHRIRVRRQEQAVRCARMLYVLQQQVKEIQEELDKLSPQKIKHTKKSWAVSRLAAAHRAAIRALQVFVTQFTDRGEHPVPARCRELGSLIRQLSLCSAKLDADPSVPDVVIDILQQIEALESLLEKKLSPKKAKKCFTEIRSRFPVGSQKILERWPTVLPKSERRHLVTKETFPQETSRPPVAKRLLAAMCQPDGELQRLESEPDVLDAHLLPEEAPRIEDNGTDFKDGTLTPAKPQAVRRKALTGSMPIRKKDTVESARPQQGLHIAERNRPNQPYSKSRLQQTTVSSRLKMNRQPMKDHRAPWIPPNPTSPPASPKCAAWMKVKYSPRDAAKEQSLQQEDIHKESQLRGDAEQEAARLSWPDAESSKRLKELEELEAKEMERKQKQRLNWLEAETSRRTKELDELKAEEMDRLQKLSVSATQLADKVEEAVLERLKPLLIKAQRVNSSVEANSHLKDRPSRHAAAAAQPAEQASDVPFESRNIPQLRDCLEDTAHELWARTQDKILGSETSARLGDSKDSPDLETMMLRMEEMEKYQETVRQRYNKIVYADPHLWMHEERNDQNTPAVSEGPLASHPIKITKTATQKCPAVNILLERPCNANSLDESVTTEEGSEKREAPLPLSREDLHQRKGQTPLSVPPRMRHSIGAYCSRFEQFLRIIAHEAIGSFNPWLIAESFSDELVDEALGAVAAELQDVCEDYAEAVFTSEFLEAAA.

Positions 124–156 are disordered; that stretch reads LPHSSHKGMHTKVERKDSKSQDVCHCSHQPSRV. Residues 134–145 show a composition bias toward basic and acidic residues; the sequence is TKVERKDSKSQD. S279 is modified (phosphoserine). The segment covering 456–470 has biased composition (basic and acidic residues); the sequence is EEAPRIEDNGTDFKD. Disordered regions lie at residues 456–560 and 572–610; these read EEAP…ASPK and RDAAKEQSLQQEDIHKESQLRGDAEQEAARLSWPDAESS. Positions 515–533 are enriched in polar residues; that stretch reads PNQPYSKSRLQQTTVSSRL. Residues 547–558 are compositionally biased toward pro residues; that stretch reads WIPPNPTSPPAS. The stretch at 582–674 forms a coiled coil; the sequence is QEDIHKESQL…TQLADKVEEA (93 aa). A compositionally biased stretch (basic and acidic residues) spans 583 to 599; sequence EDIHKESQLRGDAEQEA. The residue at position 691 (S691) is a Phosphoserine. 2 disordered regions span residues 692-721 and 848-883; these read SVEANSHLKDRPSRHAAAAAQPAEQASDVP and LDESVTTEEGSEKREAPLPLSREDLHQRKGQTPLSV. Residues 707–717 show a composition bias toward low complexity; sequence AAAAAQPAEQA. Over residues 857–874 the composition is skewed to basic and acidic residues; that stretch reads GSEKREAPLPLSREDLHQ. The necessary and sufficient for CEP20-binding stretch occupies residues 877-959; the sequence is GQTPLSVPPR…FTSEFLEAAA (83 aa).

Interacts with CEP63 and WDR62. Forms a complex with OFD1 and CEP20/FOR20. Interacts with PCM1.

Its subcellular location is the cytoplasm. It is found in the cytoskeleton. The protein resides in the microtubule organizing center. It localises to the centrosome. The protein localises to the centriolar satellite. In terms of biological role, involved in centriole duplication. Positively regulates CEP63 centrosomal localization. Required for WDR62 centrosomal localization and promotes the centrosomal localization of CDK2. May play a role in cilium assembly. The sequence is that of Protein moonraker (Kiaa0753) from Mus musculus (Mouse).